Consider the following 431-residue polypeptide: Tyrosine--tRNA ligase (431 aa).

L-tyrosine is bound at residue Tyr33. A 'HIGH' region motif is present at residues 38 to 47 (PTADSLHIGS). L-tyrosine contacts are provided by Tyr172 and Gln176. A 'KMSKS' region motif is present at residues 234–238 (KFGKS). Residue Lys237 coordinates ATP. The 68-residue stretch at 364–431 (LDIVTVLNEK…KKNYFVIRVV (68 aa)) folds into the S4 RNA-binding domain.

The protein belongs to the class-I aminoacyl-tRNA synthetase family. TyrS type 1 subfamily. In terms of assembly, homodimer.

The protein resides in the cytoplasm. It catalyses the reaction tRNA(Tyr) + L-tyrosine + ATP = L-tyrosyl-tRNA(Tyr) + AMP + diphosphate + H(+). Functionally, catalyzes the attachment of tyrosine to tRNA(Tyr) in a two-step reaction: tyrosine is first activated by ATP to form Tyr-AMP and then transferred to the acceptor end of tRNA(Tyr). The sequence is that of Tyrosine--tRNA ligase from Flavobacterium johnsoniae (strain ATCC 17061 / DSM 2064 / JCM 8514 / BCRC 14874 / CCUG 350202 / NBRC 14942 / NCIMB 11054 / UW101) (Cytophaga johnsonae).